The following is a 469-amino-acid chain: Serine/threonine-protein kinase orb6 (469 aa).

The region spanning 93–392 is the Protein kinase domain; it reads FSTIKVIGKG…AIEIMQHPFF (300 aa). Residues 99 to 107 and K122 each bind ATP; that span reads IGKGAFGEV. D216 functions as the Proton acceptor in the catalytic mechanism. The AGC-kinase C-terminal domain maps to 393-467; that stretch reads TGIDWDHIRE…KKFNYLTMKG (75 aa).

The protein belongs to the protein kinase superfamily. Ser/Thr protein kinase family. As to quaternary structure, interacts with mob2.

It catalyses the reaction L-seryl-[protein] + ATP = O-phospho-L-seryl-[protein] + ADP + H(+). The enzyme catalyses L-threonyl-[protein] + ATP = O-phospho-L-threonyl-[protein] + ADP + H(+). Its function is as follows. Interacts with pak1/shk1 and coordinates cell morphogenesis with the cell cycle. It is essential for maintenance of cell polarity and is involved in mitotic control. The sequence is that of Serine/threonine-protein kinase orb6 (orb6) from Schizosaccharomyces pombe (strain 972 / ATCC 24843) (Fission yeast).